Reading from the N-terminus, the 3460-residue chain is Reelin (3460 aa).

An N-terminal signal peptide occupies residues 1 to 25; that stretch reads MERSGWARQTFLLALLLGATLRARA. Residues 26 to 190 enclose the Reelin domain; it reads AAGYYPRFSP…GAPTDVTVHP (165 aa). Cys-40 and Cys-126 are disulfide-bonded. A glycan (N-linked (GlcNAc...) asparagine) is linked at Asn-140. A disulfide bridge connects residues Cys-154 and Cys-178. N-linked (GlcNAc...) asparagine glycosylation is found at Asn-257, Asn-289, and Asn-305. A disulfide bridge links Cys-539 with Cys-580. The BNR 1 repeat unit spans residues 592 to 603; that stretch reads EFSTNHGRSWSL. Cys-608 and Cys-613 are joined by a disulfide. A glycan (N-linked (GlcNAc...) asparagine) is linked at Asn-628. The EGF-like 1 domain maps to 670–701; sequence IGPSCLKFCSGRGQCTRHGCKCDPGFSGPACE. Cystine bridges form between Cys-674/Cys-684 and Cys-691/Cys-700. The BNR 2 repeat unit spans residues 798-809; sequence HYSYDNGITWKL. A disulfide bridge connects residues Cys-894 and Cys-936. One copy of the BNR 3 repeat lies at 951–962; it reads EYSTNHGLTWHL. Disulfide bonds link Cys-967–Cys-974, Cys-1033–Cys-1043, and Cys-1050–Cys-1059. One can recognise an EGF-like 2 domain in the interval 1029-1060; the sequence is IGQQCPNMCSGHGSCDHGICRCDQGYQGTECH. A BNR 4 repeat occupies 1156–1167; it reads QYSNNGGIQWHL. N-linked (GlcNAc...) asparagine glycosylation occurs at Asn-1266. Residues Cys-1270 and Cys-1309 are joined by a disulfide bond. The BNR 5 repeat unit spans residues 1322–1333; sequence QYSHDAGMSWFL. Cys-1338 and Cys-1347 form a disulfide bridge. In terms of domain architecture, EGF-like 3 spans 1408–1441; sequence ISEPCPSYCSGHGDCISGVCFCDLGYTAAQGTCV. A BNR 6 repeat occupies 1534-1545; it reads QYSNDNGILWHL. Asn-1599 is a glycosylation site (N-linked (GlcNAc...) asparagine). Cysteines 1632 and 1672 form a disulfide. One copy of the BNR 7 repeat lies at 1685–1696; that stretch reads QYSLNNGKDWHL. Cys-1701 and Cys-1708 are disulfide-bonded. Residue Asn-1749 is glycosylated (N-linked (GlcNAc...) asparagine). An EGF-like 4 domain is found at 1764 to 1795; sequence LASGCPWMCSGRGICDAGRCVCDRGFGGPYCV. A BNR 8 repeat occupies 1883 to 1894; sequence QFSISGGITWHL. N-linked (GlcNAc...) asparagine glycosylation occurs at Asn-1920. The BNR 9 repeat unit spans residues 2042-2053; that stretch reads EFSRDFGATWHL. Residues His-2060 and His-2073 each contribute to the Zn(2+) site. The EGF-like 5 domain maps to 2128-2160; sequence IGPQCEEMCNGQGSCINGTKCICDPGYSGPTCK. Intrachain disulfides connect Cys-2132-Cys-2142, Cys-2136-Cys-2148, and Cys-2150-Cys-2159. Asn-2144 is a glycosylation site (N-linked (GlcNAc...) asparagine). Glu-2178 lines the Zn(2+) pocket. Cys-2194 and Cys-2234 form a disulfide bridge. The BNR 10 repeat unit spans residues 2249 to 2260; sequence QYSLNGGLSWSL. A Zn(2+)-binding site is contributed by Glu-2263. Residues Asn-2268 and Asn-2316 are each glycosylated (N-linked (GlcNAc...) asparagine). Intrachain disulfides connect Cys-2347–Cys-2386, Cys-2392–Cys-2558, and Cys-2543–Cys-2583. Positions 2396, 2398, and 2459 each coordinate Zn(2+). One copy of the BNR 11 repeat lies at 2398–2409; it reads EYSVDLGLSWHP. The region spanning 2477-2508 is the EGF-like 6 domain; it reads IGDGCIDMCSGHGRCIQGNCVCDEQWGGLYCD. N-linked (GlcNAc...) asparagine glycosylation occurs at Asn-2568. BNR repeat units follow at residues 2597–2608 and 2777–2788; these read EYSVNGGITWNL and QYSTDFGVSWNY. Cystine bridges form between Cys-2793/Cys-2800, Cys-2856/Cys-2866, Cys-2860/Cys-2871, Cys-2873/Cys-2882, and Cys-2918/Cys-2965. Residues 2852-2883 form the EGF-like 7 domain; it reads LGPGCLDNCRGHGDCLREQCICDPGYSGPNCY. An N-linked (GlcNAc...) asparagine glycan is attached at Asn-2961. Residues 2978-2989 form a BNR 14 repeat; that stretch reads DYSTDGGITWTL. Residues Asn-3015 and Asn-3072 are each glycosylated (N-linked (GlcNAc...) asparagine). A BNR 15 repeat occupies 3142–3154; that stretch reads EYTKDARSDSWQL. Residues Cys-3159 and Cys-3169 are joined by a disulfide bond. The N-linked (GlcNAc...) asparagine glycan is linked to Asn-3184. Residues 3227 to 3259 enclose the EGF-like 8 domain; it reads IGEACPKLCSGHGYCTTGAICICDESFQGDDCS. Cystine bridges form between Cys-3231–Cys-3241, Cys-3235–Cys-3247, Cys-3249–Cys-3258, and Cys-3295–Cys-3345. The BNR 16 repeat unit spans residues 3362–3373; the sequence is QYSVNNGITWHV. N-linked (GlcNAc...) asparagine glycosylation is found at Asn-3411 and Asn-3438.

The protein belongs to the reelin family. As to quaternary structure, oligomer of disulfide-linked homodimers. Post-translationally, N-glycosylated and to a lesser extent also O-glycosylated. As to expression, abundantly produced during brain ontogenesis by the Cajal-Retzius cells and other pioneer neurons located in the telencephalic marginal zone and by granule cells of the external granular layer of the cerebellum. In adult brain, preferentially expressed in GABAergic interneurons of prefrontal cortices, temporal cortex, hippocampus and glutamatergic granule cells of cerebellum. Expression is reduced to about 50% in patients with schizophrenia. Also expressed in fetal and adult liver.

It is found in the secreted. The protein localises to the extracellular space. The protein resides in the extracellular matrix. Its function is as follows. Extracellular matrix serine protease secreted by pioneer neurons that plays a role in layering of neurons in the cerebral cortex and cerebellum by coordinating cell positioning during neurodevelopment. Regulates microtubule function in neurons and neuronal migration. Binding to the extracellular domains of lipoprotein receptors VLDLR and LRP8/APOER2 induces tyrosine phosphorylation of DAB1 and modulation of TAU phosphorylation. Affects migration of sympathetic preganglionic neurons in the spinal cord, where it seems to act as a barrier to neuronal migration. Enzymatic activity is important for the modulation of cell adhesion. The polypeptide is Reelin (RELN) (Homo sapiens (Human)).